We begin with the raw amino-acid sequence, 301 residues long: 4-hydroxybenzoate octaprenyltransferase (301 aa).

A run of 7 helical transmembrane segments spans residues 34–54 (IGSL…AGGL), 57–77 (LWTL…GCVI), 108–128 (LWVF…LNWL), 163–183 (WGIP…AWLL), 222–242 (DLIA…LVGL), 248–268 (IAYW…FHIA), and 280–300 (FLHN…SLAL).

This sequence belongs to the UbiA prenyltransferase family. Mg(2+) serves as cofactor.

It localises to the cell inner membrane. It catalyses the reaction all-trans-octaprenyl diphosphate + 4-hydroxybenzoate = 4-hydroxy-3-(all-trans-octaprenyl)benzoate + diphosphate. It functions in the pathway cofactor biosynthesis; ubiquinone biosynthesis. Its function is as follows. Catalyzes the prenylation of para-hydroxybenzoate (PHB) with an all-trans polyprenyl group. Mediates the second step in the final reaction sequence of ubiquinone-8 (UQ-8) biosynthesis, which is the condensation of the polyisoprenoid side chain with PHB, generating the first membrane-bound Q intermediate 3-octaprenyl-4-hydroxybenzoate. This is 4-hydroxybenzoate octaprenyltransferase from Xanthomonas campestris pv. campestris (strain 8004).